Consider the following 153-residue polypeptide: Arginine repressor (153 aa).

It belongs to the ArgR family.

It localises to the cytoplasm. It participates in amino-acid biosynthesis; L-arginine biosynthesis [regulation]. Regulates arginine biosynthesis genes. This Haemophilus ducreyi (strain 35000HP / ATCC 700724) protein is Arginine repressor.